The sequence spans 220 residues: N-(5'-phosphoribosyl)anthranilate isomerase (220 aa).

It belongs to the TrpF family.

The enzyme catalyses N-(5-phospho-beta-D-ribosyl)anthranilate = 1-(2-carboxyphenylamino)-1-deoxy-D-ribulose 5-phosphate. The protein operates within amino-acid biosynthesis; L-tryptophan biosynthesis; L-tryptophan from chorismate: step 3/5. The sequence is that of N-(5'-phosphoribosyl)anthranilate isomerase from Xylella fastidiosa (strain 9a5c).